Reading from the N-terminus, the 20-residue chain is Cytotoxin drCT-1 (20 aa).

It belongs to the three-finger toxin family. Short-chain subfamily. Type IA cytotoxin sub-subfamily. Monomer in solution; Homodimer and oligomer in the presence of negatively charged lipids forming a pore with a size ranging between 20 and 30 Angstroms. In terms of tissue distribution, expressed by the venom gland.

The protein localises to the secreted. The protein resides in the target cell membrane. In terms of biological role, this three-finger cytotoxin has antiproliferative, cytotoxic and apoptotic activities. Both in vivo and in vitro experimental results suggests that this protein possess anticancer potential. Also shows neurotoxicity, cardiotoxicity and myotoxicity. The polypeptide is Cytotoxin drCT-1 (Daboia russelii (Russel's viper)).